A 108-amino-acid polypeptide reads, in one-letter code: Inner membrane protein H108R (108 aa).

A helical membrane pass occupies residues Leu-10 to Leu-32. A compositionally biased stretch (polar residues) spans Glu-49–Ser-64. A disordered region spans residues Glu-49 to Lys-69. A glycan (N-linked (GlcNAc...) asparagine; by host) is linked at Asn-50.

This sequence belongs to the asfivirus H108R family.

It is found in the virion membrane. The polypeptide is Inner membrane protein H108R (Ornithodoros (relapsing fever ticks)).